The chain runs to 346 residues: Cobalt transport protein CbiM (346 aa).

Positions 1–25 (MKRITLYAAGSAIIGAMLLAGPAHA) are cleaved as a signal peptide. 8 helical membrane passes run 31–51 (GILP…FLAL), 68–88 (PLVG…IPVP), 101–121 (IAAI…ALLI), 133–153 (TLGA…WFVF), 159–179 (LGAG…WATY), 196–216 (FYPL…PLGV), 255–275 (ATVV…AGPS), and 312–332 (LLLF…GYFW).

The protein belongs to the CbiM family. Forms an energy-coupling factor (ECF) transporter complex composed of an ATP-binding protein (A component, CbiO), a transmembrane protein (T component, CbiQ) and 2 possible substrate-capture proteins (S components, CbiM and CbiN) of unknown stoichimetry.

The protein localises to the cell inner membrane. It functions in the pathway cofactor biosynthesis; adenosylcobalamin biosynthesis. Part of the energy-coupling factor (ECF) transporter complex CbiMNOQ involved in cobalt import. This chain is Cobalt transport protein CbiM, found in Geobacter sulfurreducens (strain ATCC 51573 / DSM 12127 / PCA).